We begin with the raw amino-acid sequence, 391 residues long: Oocyte zinc finger protein XlCOF7.2 (391 aa).

4 consecutive C2H2-type zinc fingers follow at residues 284 to 306, 312 to 334, 340 to 362, and 368 to 391; these read FPCS…YRTH, YPCS…RRIH, SSCS…HRTH, and YSCS…RRTH.

This sequence belongs to the krueppel C2H2-type zinc-finger protein family.

Its subcellular location is the nucleus. May be involved in transcriptional regulation. This chain is Oocyte zinc finger protein XlCOF7.2, found in Xenopus laevis (African clawed frog).